The following is a 340-amino-acid chain: NADH-quinone oxidoreductase subunit H (340 aa).

A run of 9 helical transmembrane segments spans residues 3 to 23 (LVGM…LVYM), 69 to 89 (WAFF…WAVI), 102 to 122 (VVVM…VLAI), 127 to 147 (VYGI…LGAI), 154 to 174 (ISYE…AGSL), 186 to 206 (MPYW…VSML), 248 to 268 (ILVS…PLNI), 274 to 294 (IPGF…FIWV), and 312 to 332 (KVFL…LLWV).

This sequence belongs to the complex I subunit 1 family. NDH-1 is composed of 14 different subunits. Subunits NuoA, H, J, K, L, M, N constitute the membrane sector of the complex.

The protein resides in the cell inner membrane. It catalyses the reaction a quinone + NADH + 5 H(+)(in) = a quinol + NAD(+) + 4 H(+)(out). Functionally, NDH-1 shuttles electrons from NADH, via FMN and iron-sulfur (Fe-S) centers, to quinones in the respiratory chain. The immediate electron acceptor for the enzyme in this species is believed to be ubiquinone. Couples the redox reaction to proton translocation (for every two electrons transferred, four hydrogen ions are translocated across the cytoplasmic membrane), and thus conserves the redox energy in a proton gradient. This subunit may bind ubiquinone. The chain is NADH-quinone oxidoreductase subunit H from Anaplasma phagocytophilum (strain HZ).